Here is a 546-residue protein sequence, read N- to C-terminus: uncharacterized protein (546 aa).

Belongs to the IIV-6 098R family.

This is an uncharacterized protein from Aedes vexans (Inland floodwater mosquito).